Reading from the N-terminus, the 388-residue chain is Succinate--CoA ligase [ADP-forming] subunit beta (388 aa).

ATP-binding positions include Lys-46, Gly-53–Gly-55, Glu-99, Cys-102, and Glu-107. The Mg(2+) site is built by Asn-199 and Asp-213. Residues Asn-264 and Gly-321–Val-323 each bind substrate.

The protein belongs to the succinate/malate CoA ligase beta subunit family. As to quaternary structure, heterotetramer of two alpha and two beta subunits. Mg(2+) serves as cofactor.

It carries out the reaction succinate + ATP + CoA = succinyl-CoA + ADP + phosphate. It catalyses the reaction GTP + succinate + CoA = succinyl-CoA + GDP + phosphate. Its pathway is carbohydrate metabolism; tricarboxylic acid cycle; succinate from succinyl-CoA (ligase route): step 1/1. Succinyl-CoA synthetase functions in the citric acid cycle (TCA), coupling the hydrolysis of succinyl-CoA to the synthesis of either ATP or GTP and thus represents the only step of substrate-level phosphorylation in the TCA. The beta subunit provides nucleotide specificity of the enzyme and binds the substrate succinate, while the binding sites for coenzyme A and phosphate are found in the alpha subunit. This is Succinate--CoA ligase [ADP-forming] subunit beta from Actinobacillus pleuropneumoniae serotype 7 (strain AP76).